The sequence spans 753 residues: Bile salt-activated lipase (753 aa).

An N-terminal signal peptide occupies residues 1 to 20; that stretch reads MGRLQLVVLGLTCCWAVASA. Residues 21–121 form a heparin-binding region; the sequence is AKLGAVYTEG…KQVSRDLPVM (101 aa). Cys84 and Cys100 form a disulfide bridge. Residue Asn207 is glycosylated (N-linked (GlcNAc...) (complex) asparagine). The active-site Acyl-ester intermediate is Ser214. A disulfide bridge connects residues Cys266 and Cys277. Catalysis depends on charge relay system residues Asp340 and His455. Residues 555–753 are disordered; that stretch reads QEATPVPPTG…EAQMPAVIRF (199 aa). Thr558, Thr569, and Thr579 each carry an O-linked (GalNAc...) threonine glycan. Tandem repeats lie at residues 559–569, 570–580, 581–591, 592–602, 603–613, 614–624, 625–635, 636–646, 647–657, 658–668, 669–679, 680–690, 691–701, 702–712, 713–723, 724–734, and 735–745. The interval 559–745 is 17 X 11 AA tandem repeats, glycodomain, O-linked (mucin type); it reads PVPPTGDSEA…VPPTDDSKEA (187 aa). Residues Thr607, Thr618, Thr629, Thr640, Thr651, Thr662, and Thr673 are each glycosylated (O-linked (GalNAc...) threonine). A compositionally biased stretch (pro residues) spans 668 to 683; the sequence is PPVPPTGDAGPPPVPP.

Belongs to the type-B carboxylesterase/lipase family. Interacts with CLC. Post-translationally, N- and O-glycosylated. As to expression, mammary gland and pancreas. Detected in pancreatic and duodenal juice (at protein level). Expressed by eosinophils.

Its subcellular location is the secreted. It catalyses the reaction a triacylglycerol + H2O = a diacylglycerol + a fatty acid + H(+). It carries out the reaction 1,2,3-tri-(9Z-octadecenoyl)-glycerol + H2O = di-(9Z)-octadecenoylglycerol + (9Z)-octadecenoate + H(+). The enzyme catalyses 1,2,3-trioctanoylglycerol + H2O = dioctanoylglycerol + octanoate + H(+). The catalysed reaction is a sterol ester + H2O = a sterol + a fatty acid + H(+). It catalyses the reaction cholesteryl (9Z-octadecenoate) + H2O = cholesterol + (9Z)-octadecenoate + H(+). It carries out the reaction an acetyl ester + H2O = an aliphatic alcohol + acetate + H(+). The enzyme catalyses a butanoate ester + H2O = an aliphatic alcohol + butanoate + H(+). The catalysed reaction is 9-hexadecanoyloxy-octadecanoate + H2O = 9-hydroxy-octadecanoate + hexadecanoate + H(+). It catalyses the reaction 9-(9Z-octadecenoyloxy)-octadecanoate + H2O = 9-hydroxy-octadecanoate + (9Z)-octadecenoate + H(+). It carries out the reaction 1-hexadecanoyl-sn-glycero-3-phosphocholine + H2O = sn-glycerol 3-phosphocholine + hexadecanoate + H(+). The enzyme catalyses 12-hexadecanoyloxy-octadecanoate + H2O = 12-hydroxyoctadecanoate + hexadecanoate + H(+). The catalysed reaction is 12-(9Z-octadecenoyloxy)-octadecanoate + H2O = 12-hydroxyoctadecanoate + (9Z)-octadecenoate + H(+). It catalyses the reaction 13-(9Z-octadecenoyloxy)-octadecanoate + H2O = 13-hydroxy-octadecanoate + (9Z)-octadecenoate + H(+). It carries out the reaction 9-(9Z-hexadecenoyloxy)-octadecanoate + H2O = (9Z)-hexadecenoate + 9-hydroxy-octadecanoate + H(+). The enzyme catalyses 12-(9Z-hexadecenoyloxy)-octadecanoate + H2O = 12-hydroxyoctadecanoate + (9Z)-hexadecenoate + H(+). The catalysed reaction is 13-(9Z-hexadecenoyloxy)-octadecanoate + H2O = 13-hydroxy-octadecanoate + (9Z)-hexadecenoate + H(+). It catalyses the reaction 12-octadecanoyloxy-octadecanoate + H2O = 12-hydroxyoctadecanoate + octadecanoate + H(+). It carries out the reaction 13-octadecanoyloxy-octadecanoate + H2O = 13-hydroxy-octadecanoate + octadecanoate + H(+). The enzyme catalyses 5-(9Z-hexadecenoyloxy)-octadecanoate + H2O = 5-hydroxy-octadecanoate + (9Z)-hexadecenoate + H(+). The catalysed reaction is 9-octadecanoyloxy-octadecanoate + H2O = 9-hydroxy-octadecanoate + octadecanoate + H(+). Its activity is regulated as follows. Activated by bile salts such as sodium taurocholate. Functionally, catalyzes the hydrolysis of a wide range of substrates including cholesteryl esters, phospholipids, lysophospholipids, di- and tri-acylglycerols, and fatty acid esters of hydroxy fatty acids (FAHFAs). Preferentially hydrolyzes FAHFAs with the ester bond further away from the carboxylate. Unsaturated FAHFAs are hydrolyzed more quickly than saturated FAHFAs. Has an essential role in the complete digestion of dietary lipids and their intestinal absorption, along with the absorption of fat-soluble vitamins. The protein is Bile salt-activated lipase (CEL) of Homo sapiens (Human).